We begin with the raw amino-acid sequence, 406 residues long: Tryptophan synthase beta chain (406 aa).

Residue Lys97 is modified to N6-(pyridoxal phosphate)lysine.

This sequence belongs to the TrpB family. In terms of assembly, tetramer of two alpha and two beta chains. Requires pyridoxal 5'-phosphate as cofactor.

It catalyses the reaction (1S,2R)-1-C-(indol-3-yl)glycerol 3-phosphate + L-serine = D-glyceraldehyde 3-phosphate + L-tryptophan + H2O. The protein operates within amino-acid biosynthesis; L-tryptophan biosynthesis; L-tryptophan from chorismate: step 5/5. Functionally, the beta subunit is responsible for the synthesis of L-tryptophan from indole and L-serine. This Lacticaseibacillus paracasei (strain ATCC 334 / BCRC 17002 / CCUG 31169 / CIP 107868 / KCTC 3260 / NRRL B-441) (Lactobacillus paracasei) protein is Tryptophan synthase beta chain.